The chain runs to 130 residues: Small ribosomal subunit protein uS8 (130 aa).

It belongs to the universal ribosomal protein uS8 family. Part of the 30S ribosomal subunit.

In terms of biological role, one of the primary rRNA binding proteins, it binds directly to 16S rRNA central domain where it helps coordinate assembly of the platform of the 30S subunit. This is Small ribosomal subunit protein uS8 from Methanosarcina mazei (strain ATCC BAA-159 / DSM 3647 / Goe1 / Go1 / JCM 11833 / OCM 88) (Methanosarcina frisia).